The primary structure comprises 188 residues: MDFNKIGDENVVFQIFKLEMLIMSEFPSFIEEKDKLLCLNVLANLLGGIFENEDKIIPNYKEAVIAALFERLLLSSNQKSTSKSNQMIKLLNNSLAHNNGLPSQRCNHDSKLVYMSLVQNNGLPGQRSNYVCCPLCMEQHCIELLTYQLFAKWRNFPRIDFSPVLQGNRGPRFFYTCFLCNSTFLASA.

The protein resides in the cytoplasm. Its subcellular location is the nucleus. In terms of biological role, has a role in meiosis. This chain is Meiotically up-regulated gene 94 protein (mug94), found in Schizosaccharomyces pombe (strain 972 / ATCC 24843) (Fission yeast).